The chain runs to 347 residues: Fructose-1,6-bisphosphatase class 1 (347 aa).

Residues Glu-107, Asp-128, Leu-130, and Asp-131 each contribute to the Mg(2+) site. Substrate contacts are provided by residues 131-134 (DGSS), Asn-224, Tyr-257, and Lys-286. Glu-292 lines the Mg(2+) pocket.

This sequence belongs to the FBPase class 1 family. As to quaternary structure, homotetramer. Requires Mg(2+) as cofactor.

The protein localises to the cytoplasm. It catalyses the reaction beta-D-fructose 1,6-bisphosphate + H2O = beta-D-fructose 6-phosphate + phosphate. It functions in the pathway carbohydrate biosynthesis; gluconeogenesis. The chain is Fructose-1,6-bisphosphatase class 1 from Sorangium cellulosum (strain So ce56) (Polyangium cellulosum (strain So ce56)).